Here is a 147-residue protein sequence, read N- to C-terminus: D-aminoacyl-tRNA deacylase (147 aa).

Residues 136 to 137 (GP) carry the Gly-cisPro motif, important for rejection of L-amino acids motif.

It belongs to the DTD family. Homodimer.

Its subcellular location is the cytoplasm. The catalysed reaction is glycyl-tRNA(Ala) + H2O = tRNA(Ala) + glycine + H(+). It carries out the reaction a D-aminoacyl-tRNA + H2O = a tRNA + a D-alpha-amino acid + H(+). An aminoacyl-tRNA editing enzyme that deacylates mischarged D-aminoacyl-tRNAs. Also deacylates mischarged glycyl-tRNA(Ala), protecting cells against glycine mischarging by AlaRS. Acts via tRNA-based rather than protein-based catalysis; rejects L-amino acids rather than detecting D-amino acids in the active site. By recycling D-aminoacyl-tRNA to D-amino acids and free tRNA molecules, this enzyme counteracts the toxicity associated with the formation of D-aminoacyl-tRNA entities in vivo and helps enforce protein L-homochirality. This is D-aminoacyl-tRNA deacylase from Streptococcus dysgalactiae subsp. equisimilis (Streptococcus equisimilis).